The following is a 261-amino-acid chain: MAETTEPPSDAGTSQADAMALAAEAEAAEAEALAAAARARARAARLKREALAMAPAEDENVPEEYADWEDAEDYDDYDDYEAADQEAARSASWRRRLRVRLPRLSTIAMAAAVVIICGFTGLSGYIVWQHHEATERQQRAAAFAAGAKQGVINMTSLDFNKAKEDVARVIDSSTGEFRDDFQQRAADFTKVVEQSKVVTEGTVNATAVESMNEHSAVVLVAATSRVTNSAGAKDEPRAWRLKVTVTEEGGQYKMSKVEFVP.

Positions 1-22 (MAETTEPPSDAGTSQADAMALA) are disordered. A helical membrane pass occupies residues 107–127 (IAMAAAVVIICGFTGLSGYIV).

It to M.tuberculosis Rv1362c.

The protein localises to the membrane. This is an uncharacterized protein from Mycobacterium tuberculosis (strain ATCC 25618 / H37Rv).